A 108-amino-acid chain; its full sequence is uncharacterized protein (108 aa).

To M.jannaschii MJ1245 and M.thermoautotrophicum MTH1110.

This is an uncharacterized protein from Methanocaldococcus jannaschii (strain ATCC 43067 / DSM 2661 / JAL-1 / JCM 10045 / NBRC 100440) (Methanococcus jannaschii).